A 150-amino-acid polypeptide reads, in one-letter code: 3-dehydroquinate dehydratase (150 aa).

Tyr26 functions as the Proton acceptor in the catalytic mechanism. Substrate is bound by residues Asn77, His83, and Asp90. The Proton donor role is filled by His103. Substrate contacts are provided by residues 104 to 105 (LS) and Arg114.

It belongs to the type-II 3-dehydroquinase family. In terms of assembly, homododecamer.

The enzyme catalyses 3-dehydroquinate = 3-dehydroshikimate + H2O. The protein operates within metabolic intermediate biosynthesis; chorismate biosynthesis; chorismate from D-erythrose 4-phosphate and phosphoenolpyruvate: step 3/7. In terms of biological role, catalyzes a trans-dehydration via an enolate intermediate. The protein is 3-dehydroquinate dehydratase of Sodalis glossinidius (strain morsitans).